The sequence spans 78 residues: U7-lycotoxin-Ls1a (78 aa).

The signal sequence occupies residues 1 to 22; the sequence is MKLIIFTGLALLLIVSLIDVEA. The propeptide occupies 23-26; the sequence is QNEG.

It belongs to the neurotoxin 19 (CSTX) family. 07 (U7-Lctx) subfamily. In terms of processing, contains 4 disulfide bonds. As to expression, expressed by the venom gland.

The protein localises to the secreted. This is U7-lycotoxin-Ls1a from Lycosa singoriensis (Wolf spider).